The sequence spans 265 residues: Glutamate racemase (265 aa).

Substrate is bound by residues 10–11 and 42–43; these read DS and YG. The Proton donor/acceptor role is filled by Cys73. 74–75 lines the substrate pocket; the sequence is NT. Cys184 serves as the catalytic Proton donor/acceptor. 185–186 contacts substrate; sequence TH.

The protein belongs to the aspartate/glutamate racemases family.

The enzyme catalyses L-glutamate = D-glutamate. It participates in cell wall biogenesis; peptidoglycan biosynthesis. Functionally, provides the (R)-glutamate required for cell wall biosynthesis. The chain is Glutamate racemase from Pediococcus pentosaceus (strain ATCC 25745 / CCUG 21536 / LMG 10740 / 183-1w).